A 291-amino-acid chain; its full sequence is MEMO1 family protein TK1477 (291 aa).

This sequence belongs to the MEMO1 family.

The chain is MEMO1 family protein TK1477 from Thermococcus kodakarensis (strain ATCC BAA-918 / JCM 12380 / KOD1) (Pyrococcus kodakaraensis (strain KOD1)).